Here is a 192-residue protein sequence, read N- to C-terminus: Xanthine phosphoribosyltransferase (192 aa).

Residues leucine 20 and asparagine 27 each contribute to the xanthine site. 128-132 is a 5-phospho-alpha-D-ribose 1-diphosphate binding site; sequence ANGQA. Lysine 156 contacts xanthine.

Belongs to the purine/pyrimidine phosphoribosyltransferase family. Xpt subfamily. As to quaternary structure, homodimer.

It is found in the cytoplasm. It carries out the reaction XMP + diphosphate = xanthine + 5-phospho-alpha-D-ribose 1-diphosphate. The protein operates within purine metabolism; XMP biosynthesis via salvage pathway; XMP from xanthine: step 1/1. Converts the preformed base xanthine, a product of nucleic acid breakdown, to xanthosine 5'-monophosphate (XMP), so it can be reused for RNA or DNA synthesis. The polypeptide is Xanthine phosphoribosyltransferase (Listeria monocytogenes serotype 4b (strain CLIP80459)).